The following is a 69-amino-acid chain: Cell division protein ZapB (69 aa).

Positions 3–60 form a coiled coil; it reads LELFNQLEQKVQNAVETIEMLKMEAEELREENTRLKQERDEWERRLNGLLGKFQEIED.

The protein belongs to the ZapB family. As to quaternary structure, homodimer. The ends of the coiled-coil dimer bind to each other, forming polymers. Interacts with FtsZ.

Its subcellular location is the cytoplasm. Functionally, non-essential, abundant cell division factor that is required for proper Z-ring formation. It is recruited early to the divisome by direct interaction with FtsZ, stimulating Z-ring assembly and thereby promoting cell division earlier in the cell cycle. Its recruitment to the Z-ring requires functional FtsA or ZipA. This Chromohalobacter salexigens (strain ATCC BAA-138 / DSM 3043 / CIP 106854 / NCIMB 13768 / 1H11) protein is Cell division protein ZapB.